A 182-amino-acid chain; its full sequence is Probable pyruvoyl-dependent arginine decarboxylase (182 aa).

Pyruvic acid (Ser) is present on S43.

Belongs to the PdaD family. It depends on pyruvate as a cofactor.

It carries out the reaction L-arginine + H(+) = agmatine + CO2. This is Probable pyruvoyl-dependent arginine decarboxylase from Chloroherpeton thalassium (strain ATCC 35110 / GB-78).